The sequence spans 273 residues: E3 ubiquitin-protein ligase SDIR1 (273 aa).

Topologically, residues 1–33 are cytoplasmic; it reads MSFVFRGSRGDLESGFSGGFLPERRAMRVHGAR. Residues 34–54 form a helical membrane-spanning segment; sequence PVNSNSLAFLVTVLLLFMILN. Residues 55 to 56 lie on the Lumenal side of the membrane; it reads SH. A helical transmembrane segment spans residues 57 to 77; sequence QMPPNFLLWLVLGVFLMATTL. At 78–273 the chain is on the cytoplasmic side; the sequence is RMYATCQQLQ…EIDDDASDMV (196 aa). The RING-type; atypical zinc-finger motif lies at 211-252; the sequence is CSVCLEQVTVGEIVRTLPCLHQFHAGCIDPWLRQQGTCPVCK.

Interacts with ATP1/SDIRIP1. As to expression, ubiquitous.

The protein resides in the endoplasmic reticulum membrane. It catalyses the reaction S-ubiquitinyl-[E2 ubiquitin-conjugating enzyme]-L-cysteine + [acceptor protein]-L-lysine = [E2 ubiquitin-conjugating enzyme]-L-cysteine + N(6)-ubiquitinyl-[acceptor protein]-L-lysine.. In terms of biological role, E3 ubiquitin-protein ligase that acts as a positive regulator of abscisic acid-related stress signal transduction. Interacts with and ubiquitinates ATP1/SDIRIP1 to modulate ATP1/SDIRIP1 stability through the 26S proteasome pathway. Regulates abscisic acid (ABA) and salt stress responses by negatively affecting ATP1/SDIRIP1 stability. The SDIR1-ATP1/SDIRIP1 complex plays an important role in ABA signaling through the ubiquitination pathway. This Arabidopsis thaliana (Mouse-ear cress) protein is E3 ubiquitin-protein ligase SDIR1.